We begin with the raw amino-acid sequence, 95 residues long: Protein TusB (95 aa).

It belongs to the DsrH/TusB family. In terms of assembly, heterohexamer, formed by a dimer of trimers. The hexameric TusBCD complex contains 2 copies each of TusB, TusC and TusD. The TusBCD complex interacts with TusE.

It is found in the cytoplasm. Part of a sulfur-relay system required for 2-thiolation of 5-methylaminomethyl-2-thiouridine (mnm(5)s(2)U) at tRNA wobble positions. This chain is Protein TusB, found in Pectobacterium carotovorum subsp. carotovorum (strain PC1).